A 495-amino-acid chain; its full sequence is Acyltransferase abl6 (495 aa).

His-171 serves as the catalytic Proton acceptor.

The protein belongs to the plant acyltransferase family.

In terms of biological role, acyltransferase; part of the gene cluster that mediates the biosynthesis of abscisic acid (ABA), a phytohormone that acts antagonistically toward salicylic acid (SA), jasmonic acid (JA) and ethylene (ETH) signaling, to impede plant defense responses. The first step of the pathway catalyzes the reaction from farnesyl diphosphate to alpha-ionylideneethane performed by the alpha-ionylideneethane synthase abl3 via a three-step reaction mechanism involving 2 neutral intermediates, beta-farnesene and allofarnesene. The cytochrome P450 monooxygenase abl1 might then be involved in the conversion of alpha-ionylideneethane to alpha-ionylideneacetic acid. Alpha-ionylideneacetic acid is further converted to abscisic acid in 2 steps involving the cytochrome P450 monooxygenase abl2 and the short-chain dehydrogenase/reductase abl4, via the intermediates 1'-deoxy-ABA or 1',4'-trans-diol-ABA, depending on the order of action of these 2 enzymes. Abl2 is responsible for the hydroxylation of carbon atom C-1' and abl4 might be involved in the oxidation of the C-4' carbon atom. The acyltransferase abl6 seems not essential for the biosynthesis of ABA, but it may acetylate ABA as part of the synthesis of another ABA-related molecule. The sequence is that of Acyltransferase abl6 from Leptosphaeria maculans (strain JN3 / isolate v23.1.3 / race Av1-4-5-6-7-8) (Blackleg fungus).